A 308-amino-acid polypeptide reads, in one-letter code: MNSPNQNTRPIVIALGGNALLQRGQPPEAEIQKANIHIAALAIAKIARHYPVVVTHGNGPQVGLLALQGECEKSCKPYPLDVLGAETEGMIGYLLEQELRNQLPGRDVVTLLTQIVVDRQDPAFLQPTKPIGPVYTLEQAQQLAQERGWAIAADGQGYRRVVASPEPKRIIELPTIQLLVKSGALVVCAGGGGIPVVVNEAGGLQGVEAVIDKDLAAALLAQNLQAQGLLLLTDVDGVYENWSTNYAHCFEQTTPKNLRRYRFAAGSMGPKVEAACRFVETTGQWCGIGKLDQALDIIDGKAGTVVMP.

This sequence belongs to the carbamate kinase family.

The protein localises to the cytoplasm. It carries out the reaction hydrogencarbonate + NH4(+) + ATP = carbamoyl phosphate + ADP + H2O + H(+). In Synechocystis sp. (strain ATCC 27184 / PCC 6803 / Kazusa), this protein is Carbamate kinase.